We begin with the raw amino-acid sequence, 1428 residues long: MDISKKEKLKLLLEQIRMPDNEIEAHFSNSYLDKVEVHKADKKWHFYINIDHVLPFQTYQLFHHSLKESFASIAEVSLTLSAENRHCPEGDIQIYWKHFIAQTSLSPAYRDLVLDQAPEVSNNKIMLTARNEAEASALKKRLEAKFHDFCLSIGSLPYTLEVEVKTNTEAMQEFRDKKALEDQQLVMKTVQEKEKRDKDKSVPDQQPLAIGYKIQDEPITMDQIIDEERRITVQGYVFDAEVRELRSGRSLLIIKATDYTDSIQIKMFSKGDEDAAKFASVKKGMWVKARGSIQTDMYTNELAMMAKDIHEIHVSQRMDDASEDKKRVELHTHTTMSQMDAVVSPEALVEQAAKWGHKAIAITDHAGVQGFPDAHNAGKKHGVKVLYGVEANLVDDGVPIAYNEADRNLYEDTFVVFDVETTGLSAVYDTIIELAAVKIKGGEIVDRFESFANPHHALSQTTIDLTGITDDMVNDAPEVADVLKDFHTWMGNDILVAHNASFDMGFLNQGFQRIDYEKASNPVVDTLELARFLLPELRNHRLNTLCKHLDIELTQHHRAIYDAEATGYLLWKLVQRLVEKEISNHLELNNHMGENNAYQRSRPYHCTLIAQTEEGLKNLYKLVSRAHIDFFYRVPRLPRSVLQKHREGILVGTACDKGEVFETMMQKSEEEAEQVADFYDYIEVQPPENYTHLIEKDLVQNESQILDILRKLVNLGDKMKKTVVATGNVHYLHEHDKQYRQILIGSQAGNPLSRHKLPDTPFRTTTEMINCFHFLGEKKANEIVVDNTQKLTDSIEEISPVKDGLFTPNIEGAEQEMRDLCYNKAKEVYGEPVPQIVVDRLEKELESIIGNGFAVIYLISQKLVKKSLDDGYLVGSRGSVGSSFVATMTEITEVNPLVPHYVCKHCHHHEFFTDGSVASGFDLPDKDCPGCGKGLTKDGQDIPFETFLGFKGDKVPDIDLNFSGDYQPRAHNYTKELFGIDNVYRAGTIGTVAEKTAYGYVKGYASDNQFVYKNAEVDRLVQGCTGVKRTTGQHPGGIIVVPSDKEIYDFTPIQFPADDRNSEWRTTHFDFHSIHDNLLKLDILGHDDPTVIRMLQDLSGMDPKNIPTDDEEVMKIFSGTESLGVTPEQINCKTGTLGVPEFGTKFVRQMLEDTKPKTFAELLIISGLSHGTDVWLGNAQELINDGICQLPDVIGCRDDIMVYLMHKGLDPSMAFTIMEFVRKGKGLKDEWIDEMKKHAVPDWYIESCKKIKYMFPKAHAAAYVLMAVRIAYFKVHHPILFYAAYFTVRADDFELDTMIKGSDAIRKRIEEITVKGNDASPKEKNLLTVLEISLEMCERGFSFKKVDLYQSSATDFIVEGDSLLPPFNAVDGLGTNAALNIVKAREEGEFLSKEDLRERSKISKTVLEYLDNHGCLEGMEDKNQLSLF.

The Exonuclease domain occupies 414-570 (FVVFDVETTG…YDAEATGYLL (157 aa)).

The protein belongs to the DNA polymerase type-C family. PolC subfamily.

It localises to the cytoplasm. It carries out the reaction DNA(n) + a 2'-deoxyribonucleoside 5'-triphosphate = DNA(n+1) + diphosphate. Required for replicative DNA synthesis. This DNA polymerase also exhibits 3' to 5' exonuclease activity. The polypeptide is DNA polymerase III PolC-type (Oceanobacillus iheyensis (strain DSM 14371 / CIP 107618 / JCM 11309 / KCTC 3954 / HTE831)).